The primary structure comprises 119 residues: C-C motif chemokine 24 (119 aa).

The N-terminal stretch at 1–26 (MAGSATIVAGLLLLVACACCIFPIDS) is a signal peptide. 2 disulfides stabilise this stretch: Cys-33-Cys-58 and Cys-34-Cys-74. N-linked (GlcNAc...) asparagine glycans are attached at residues Asn-54 and Asn-115. A disordered region spans residues 96 to 119 (PSKGAKAVRTKFAVQRRRGNSTEV). Over residues 101–119 (KAVRTKFAVQRRRGNSTEV) the composition is skewed to basic residues.

It belongs to the intercrine beta (chemokine CC) family. In terms of tissue distribution, highest expression in jejunum and spleen. Lower levels found in liver and lung. No expression detected in kidney, thymus, brain or testis.

Its subcellular location is the secreted. In terms of biological role, chemotactic for resting T-lymphocytes, and eosinophils. Has lower chemotactic activity for neutrophils but none for monocytes and activated lymphocytes. Is a strong suppressor of colony formation by a multipotential hematopoietic progenitor cell line. Binds to CCR3. The sequence is that of C-C motif chemokine 24 from Mus musculus (Mouse).